A 300-amino-acid polypeptide reads, in one-letter code: Bifunctional protein FolD (300 aa).

NADP(+) is bound by residues 169 to 171, Ser196, and Ile237; that span reads GRG.

This sequence belongs to the tetrahydrofolate dehydrogenase/cyclohydrolase family. Homodimer.

It carries out the reaction (6R)-5,10-methylene-5,6,7,8-tetrahydrofolate + NADP(+) = (6R)-5,10-methenyltetrahydrofolate + NADPH. The catalysed reaction is (6R)-5,10-methenyltetrahydrofolate + H2O = (6R)-10-formyltetrahydrofolate + H(+). The protein operates within one-carbon metabolism; tetrahydrofolate interconversion. Its function is as follows. Catalyzes the oxidation of 5,10-methylenetetrahydrofolate to 5,10-methenyltetrahydrofolate and then the hydrolysis of 5,10-methenyltetrahydrofolate to 10-formyltetrahydrofolate. This Clavibacter michiganensis subsp. michiganensis (strain NCPPB 382) protein is Bifunctional protein FolD.